We begin with the raw amino-acid sequence, 453 residues long: Glutamyl-tRNA(Gln) amidotransferase subunit A (453 aa).

Residues lysine 53 and serine 128 each act as charge relay system in the active site. The Acyl-ester intermediate role is filled by serine 152.

It belongs to the amidase family. GatA subfamily. Heterotrimer of A, B and C subunits.

It catalyses the reaction L-glutamyl-tRNA(Gln) + L-glutamine + ATP + H2O = L-glutaminyl-tRNA(Gln) + L-glutamate + ADP + phosphate + H(+). Allows the formation of correctly charged Gln-tRNA(Gln) through the transamidation of misacylated Glu-tRNA(Gln) in organisms which lack glutaminyl-tRNA synthetase. The reaction takes place in the presence of glutamine and ATP through an activated gamma-phospho-Glu-tRNA(Gln). The chain is Glutamyl-tRNA(Gln) amidotransferase subunit A from Helicobacter pylori (strain P12).